The primary structure comprises 347 residues: 5-formaminoimidazole-4-carboxamide-1-(beta)-D-ribofuranosyl 5'-monophosphate synthetase (347 aa).

5-amino-1-(5-phospho-beta-D-ribosyl)imidazole-4-carboxamide contacts are provided by histidine 23 and serine 91. Residues 112-323 (RKILLWESDQ…YSYLYWDEPM (212 aa)) form the ATP-grasp domain. ATP is bound by residues 142–196 (PDEV…VPAY) and glutamate 218. A 5-amino-1-(5-phospho-beta-D-ribosyl)imidazole-4-carboxamide-binding site is contributed by asparagine 244. Mg(2+)-binding residues include glutamate 283 and glutamate 296.

The protein belongs to the phosphohexose mutase family. Mg(2+) serves as cofactor. Mn(2+) is required as a cofactor.

It carries out the reaction 5-amino-1-(5-phospho-beta-D-ribosyl)imidazole-4-carboxamide + formate + ATP = 5-formamido-1-(5-phospho-D-ribosyl)imidazole-4-carboxamide + ADP + phosphate. The protein operates within purine metabolism; IMP biosynthesis via de novo pathway; 5-formamido-1-(5-phospho-D-ribosyl)imidazole-4-carboxamide from 5-amino-1-(5-phospho-D-ribosyl)imidazole-4-carboxamide (formate route): step 1/1. Functionally, catalyzes the ATP- and formate-dependent formylation of 5-aminoimidazole-4-carboxamide-1-beta-d-ribofuranosyl 5'-monophosphate (AICAR) to 5-formaminoimidazole-4-carboxamide-1-beta-d-ribofuranosyl 5'-monophosphate (FAICAR) in the absence of folates. This chain is 5-formaminoimidazole-4-carboxamide-1-(beta)-D-ribofuranosyl 5'-monophosphate synthetase, found in Ignicoccus hospitalis (strain KIN4/I / DSM 18386 / JCM 14125).